Consider the following 427-residue polypeptide: Glutamate-1-semialdehyde 2,1-aminomutase (427 aa).

An N6-(pyridoxal phosphate)lysine modification is found at lysine 265.

It belongs to the class-III pyridoxal-phosphate-dependent aminotransferase family. HemL subfamily. Homodimer. Requires pyridoxal 5'-phosphate as cofactor.

Its subcellular location is the cytoplasm. The enzyme catalyses (S)-4-amino-5-oxopentanoate = 5-aminolevulinate. It functions in the pathway porphyrin-containing compound metabolism; protoporphyrin-IX biosynthesis; 5-aminolevulinate from L-glutamyl-tRNA(Glu): step 2/2. The sequence is that of Glutamate-1-semialdehyde 2,1-aminomutase from Burkholderia cenocepacia (strain HI2424).